Here is a 345-residue protein sequence, read N- to C-terminus: Aspartate--ammonia ligase (345 aa).

Belongs to the class-II aminoacyl-tRNA synthetase family. AsnA subfamily.

The protein localises to the cytoplasm. The catalysed reaction is L-aspartate + NH4(+) + ATP = L-asparagine + AMP + diphosphate + H(+). The protein operates within amino-acid biosynthesis; L-asparagine biosynthesis; L-asparagine from L-aspartate (ammonia route): step 1/1. The sequence is that of Aspartate--ammonia ligase from Parabacteroides distasonis (strain ATCC 8503 / DSM 20701 / CIP 104284 / JCM 5825 / NCTC 11152).